Consider the following 680-residue polypeptide: Lipase 1 (680 aa).

A signal peptide spans 1–34; the sequence is MKSQNKYSIRKFSVGASSILIATLLFLSGGQAQA. A propeptide spanning residues 35–290 is cleaved from the precursor; the sequence is AEKQVNMGNS…AKAKDDQTNK (256 aa). Residues 82 to 259 are disordered; it reads KNLHNDKTIS…PTKDNDKKNG (178 aa). The span at 84–111 shows a compositional bias: basic and acidic residues; it reads LHNDKTISEENHRKTDDLNKDQLKDDKN. Polar residues-rich tracts occupy residues 125-138, 162-193, and 204-223; these read KNNNANPSDVNQGL, SQDSNANNNLPSQSLTKEAPSLNKSDQTSQRE, and QPQQNNQANDKITNHNFNNE. Over residues 224–234 the composition is skewed to basic and acidic residues; that stretch reads QEVKPQKDEKT. The span at 235–246 shows a compositional bias: polar residues; sequence LSVSDLKNNQKS. The Nucleophile role is filled by Ser-408. Asp-600 serves as the catalytic Charge relay system. Asp-638 contributes to the Ca(2+) binding site. The active-site Charge relay system is His-639. 3 residues coordinate Ca(2+): Asp-641, Asp-646, and Asp-649.

Belongs to the AB hydrolase superfamily. Lipase family.

Its subcellular location is the secreted. It catalyses the reaction a triacylglycerol + H2O = a diacylglycerol + a fatty acid + H(+). The sequence is that of Lipase 1 (lip1) from Staphylococcus aureus (strain Mu50 / ATCC 700699).